The sequence spans 108 residues: N(4)-acetylcytidine amidohydrolase (108 aa).

The ASCH domain occupies 5–102 (ITFFQRLERS…NDLFFISFRV (98 aa)). K20 functions as the Proton acceptor in the catalytic mechanism. Residue T23 is the Nucleophile of the active site. E73 serves as the catalytic Proton donor.

This sequence belongs to the N(4)-acetylcytidine amidohydrolase family.

It carries out the reaction N(4)-acetylcytidine + H2O = cytidine + acetate + H(+). The catalysed reaction is N(4)-acetyl-2'-deoxycytidine + H2O = 2'-deoxycytidine + acetate + H(+). It catalyses the reaction N(4)-acetylcytosine + H2O = cytosine + acetate + H(+). Functionally, catalyzes the hydrolysis of N(4)-acetylcytidine (ac4C). This chain is N(4)-acetylcytidine amidohydrolase, found in Moritella marina (Vibrio marinus).